Here is a 366-residue protein sequence, read N- to C-terminus: MMLVQLRQVGVIRSPYKNFSKAPHQGRFSKETVEIEIFPEFEDGLKDIETCTHLIVLYWLDRANRDALLVVPPHDSREHGVFATRSPHRPNPIGFAVVELLERDGRVLKVKGLDALDGTPVVDIKPYSSTIDSVGNAKIGWFEEANPQSKLTRLLLRAKEFHGHICPFVALGVRMSVIAMEKLGVEEDAMASVGEDILAIVECNNCLTDGVQVATGCTLGNNSLIYLDLGKNALTIVRRKDWKGVRVYVNAENVRKYFSKEALELFNKVIVRREGSEEDAKRLSEFWEETGWKMLEIPEEEFKVEFVEVQPIERAPIFENKRCEKCGELAMATRVKDGLCLRCAGSYYAVVGRGIVKFDGEMREVV.

One can recognise a TsaA-like domain in the interval 6 to 136; the sequence is LRQVGVIRSP…YSSTIDSVGN (131 aa). Residues 23–25, 61–62, Arg85, and 116–119 each bind S-adenosyl-L-methionine; these read PHQ, DR, and LDGT.

Belongs to the tRNA methyltransferase O family.

This is Probable S-adenosyl-L-methionine-binding protein AF_0433 from Archaeoglobus fulgidus (strain ATCC 49558 / DSM 4304 / JCM 9628 / NBRC 100126 / VC-16).